A 450-amino-acid chain; its full sequence is Zinc finger protein 277 (450 aa).

N-acetylalanine is present on A2. C2H2-type zinc fingers lie at residues 224 to 248 (LQCL…KKQH) and 355 to 381 (HQCR…ETKH).

Belongs to the ZNF277 family. As to quaternary structure, interacts (via zinc-finger domains) with RPS2/40S ribosomal protein S2, perhaps as nascent RPS2 is synthesized during translation; the interaction is direct; the interaction is extra-ribosomal. Interaction with RPS2 competes with the binding of RPS2 to protein arginine methyltransferase PRMT3. Interacts with Polycomb group (PcG) complex protein BMI1. May be part of a complex including at least ZNF277, BMI1 and RNF2/RING2.

The protein resides in the nucleus. Functionally, probable transcription factor. Involved in modulation of cellular senescence; represses transcription of the tumor suppressor gene INK4A/ARF, perhaps acting via the Polycomb group (PcG) complex PRC1. The protein is Zinc finger protein 277 (ZNF277) of Homo sapiens (Human).